A 1217-amino-acid chain; its full sequence is Rho family-interacting cell polarization regulator 1 (1217 aa).

Position 22 is a phosphoserine (Ser22). Residues 83 to 112 are a coiled coil; sequence RGLTAYLEVHQQEQEKLQRQIKESKRNSRL. Residues Ser345 and Ser347 each carry the phosphoserine modification. The residue at position 351 (Thr351) is a Phosphothreonine. The segment at 371 to 413 is disordered; it reads NGTAWSLSSESSDDSSSPQLSGTARYSSTPKPLVQQPEPLPVQ. 2 stretches are compositionally biased toward low complexity: residues 376–391 and 400–413; these read SLSS…PQLS and PKPL…LPVQ. Phosphoserine occurs at positions 452 and 455. A disordered region spans residues 565–762; sequence TSTTVGSTHK…SPSSIVPEPQ (198 aa). The span at 579–594 shows a compositional bias: polar residues; sequence PLTSTGSIPSVTDSIQ. Residues 595-649 are compositionally biased toward low complexity; sequence TTTSPTHTTPSPTHTTVSPTHSTPSPTHTTVSPSNAALSPSNATPSLSHSTTSPT. The segment covering 650–661 has biased composition (polar residues); it reads QKATMSTHTTSA. A compositionally biased stretch (low complexity) spans 664-695; it reads PVQTTTSPISTTVSPSPSVDTAIISSSSAVPS. Positions 720–729 are enriched in polar residues; sequence ACTSSPSLAS. Residue Ser742 is modified to Phosphoserine. The stretch at 786–828 forms a coiled coil; sequence RRLEEALRTLMAALDDYRGQFPELQGLEQEVTRLESLLMQRQG. The tract at residues 850–874 is disordered; sequence FLNDDEDEDNDSPGDRPTSSPEVVA. Residues 852 to 861 show a composition bias toward acidic residues; the sequence is NDDEDEDNDS. Phosphoserine is present on residues Ser868 and Ser869.

The protein belongs to the RIPOR family. Interacts (via N-terminus) with RHOA (GTP-bound form); this interaction links active RHOA to STK24 and STK26 kinases. Interacts with RHOB. Interacts with RHOC. Interacts (via C-terminus) with PDCD10; this interaction occurs in a Rho-independent manner. Interacts (via C-terminus) with STK24; this interaction occurs in a PDCD10-dependent and Rho-independent manner. Interacts (via C-terminus) with STK26; this interaction occurs in a PDCD10-dependent and Rho-independent manner. Interacts (via N-terminus) with 14-3-3 proteins; these interactions occur in a Rho-dependent manner.

Its subcellular location is the cytoplasm. It is found in the golgi apparatus. In terms of biological role, downstream effector protein for Rho-type small GTPases that plays a role in cell polarity and directional migration. Acts as an adapter protein, linking active Rho proteins to STK24 and STK26 kinases, and hence positively regulates Golgi reorientation in polarized cell migration upon Rho activation. Involved in the subcellular relocation of STK26 from the Golgi to cytoplasm punctae in a Rho- and PDCD10-dependent manner upon serum stimulation. The chain is Rho family-interacting cell polarization regulator 1 from Rattus norvegicus (Rat).